Reading from the N-terminus, the 321-residue chain is UPF0026 protein MJ1312 (321 aa).

The Radical SAM core domain maps to 11–236; it reads RRLGKSLGIN…AIFNEIIGKN (226 aa). C27, C31, and C34 together coordinate [4Fe-4S] cluster.

The protein belongs to the UPF0026 family. [4Fe-4S] cluster serves as cofactor.

This chain is UPF0026 protein MJ1312, found in Methanocaldococcus jannaschii (strain ATCC 43067 / DSM 2661 / JAL-1 / JCM 10045 / NBRC 100440) (Methanococcus jannaschii).